The primary structure comprises 1261 residues: Mediator of RNA polymerase II transcription subunit 14 (1261 aa).

Residues 1–11 show a composition bias toward basic and acidic residues; it reads MPNGKQQHEVT. Disordered stretches follow at residues 1–21, 413–435, and 1193–1220; these read MPNGKQQHEVTESSSPPEIPH, NETAIVDDNDNDNDDTNNTGETE, and DNDIKPQQQEPQQNEKENSKTTSKENET. A compositionally biased stretch (acidic residues) spans 417-427; sequence IVDDNDNDNDD. The segment covering 1205–1220 has biased composition (basic and acidic residues); the sequence is QNEKENSKTTSKENET.

Belongs to the Mediator complex subunit 14 family. In terms of assembly, component of the Mediator complex.

It is found in the nucleus. Functionally, component of the Mediator complex, a coactivator involved in the regulated transcription of nearly all RNA polymerase II-dependent genes. Mediator functions as a bridge to convey information from gene-specific regulatory proteins to the basal RNA polymerase II transcription machinery. Mediator is recruited to promoters by direct interactions with regulatory proteins and serves as a scaffold for the assembly of a functional preinitiation complex with RNA polymerase II and the general transcription factors. The polypeptide is Mediator of RNA polymerase II transcription subunit 14 (MED14) (Candida albicans (strain SC5314 / ATCC MYA-2876) (Yeast)).